Reading from the N-terminus, the 173-residue chain is Photosystem I assembly protein Ycf3 (173 aa).

TPR repeat units follow at residues 35–68, 72–105, and 120–153; these read AFVY…EEDT, GYIL…NPRL, and GEKE…APNN.

The protein belongs to the Ycf3 family.

It is found in the cellular thylakoid membrane. Its function is as follows. Essential for the assembly of the photosystem I (PSI) complex. May act as a chaperone-like factor to guide the assembly of the PSI subunits. The chain is Photosystem I assembly protein Ycf3 from Nostoc punctiforme (strain ATCC 29133 / PCC 73102).